The sequence spans 126 residues: Small ribosomal subunit protein uS13 (126 aa).

The disordered stretch occupies residues 99–126; sequence LRGQSTKNNARTRKGKRKTVANKKRVTK. The span at 108 to 126 shows a compositional bias: basic residues; it reads ARTRKGKRKTVANKKRVTK.

Belongs to the universal ribosomal protein uS13 family. Part of the 30S ribosomal subunit. Forms a loose heterodimer with protein S19. Forms two bridges to the 50S subunit in the 70S ribosome.

Functionally, located at the top of the head of the 30S subunit, it contacts several helices of the 16S rRNA. In the 70S ribosome it contacts the 23S rRNA (bridge B1a) and protein L5 of the 50S subunit (bridge B1b), connecting the 2 subunits; these bridges are implicated in subunit movement. Contacts the tRNAs in the A and P-sites. The chain is Small ribosomal subunit protein uS13 from Azobacteroides pseudotrichonymphae genomovar. CFP2.